We begin with the raw amino-acid sequence, 97 residues long: Large ribosomal subunit protein uL23 (97 aa).

It belongs to the universal ribosomal protein uL23 family. As to quaternary structure, part of the 50S ribosomal subunit. Contacts protein L29, and trigger factor when it is bound to the ribosome.

In terms of biological role, one of the early assembly proteins it binds 23S rRNA. One of the proteins that surrounds the polypeptide exit tunnel on the outside of the ribosome. Forms the main docking site for trigger factor binding to the ribosome. The chain is Large ribosomal subunit protein uL23 from Anaeromyxobacter sp. (strain Fw109-5).